A 308-amino-acid polypeptide reads, in one-letter code: Aspartate carbamoyltransferase catalytic subunit (308 aa).

Arginine 55 and threonine 56 together coordinate carbamoyl phosphate. Residue lysine 85 coordinates L-aspartate. Carbamoyl phosphate is bound by residues arginine 106, histidine 135, and glutamine 138. The L-aspartate site is built by arginine 168 and arginine 229. Residues leucine 267 and proline 268 each contribute to the carbamoyl phosphate site.

The protein belongs to the aspartate/ornithine carbamoyltransferase superfamily. ATCase family. In terms of assembly, heterododecamer (2C3:3R2) of six catalytic PyrB chains organized as two trimers (C3), and six regulatory PyrI chains organized as three dimers (R2).

The enzyme catalyses carbamoyl phosphate + L-aspartate = N-carbamoyl-L-aspartate + phosphate + H(+). Its pathway is pyrimidine metabolism; UMP biosynthesis via de novo pathway; (S)-dihydroorotate from bicarbonate: step 2/3. Its function is as follows. Catalyzes the condensation of carbamoyl phosphate and aspartate to form carbamoyl aspartate and inorganic phosphate, the committed step in the de novo pyrimidine nucleotide biosynthesis pathway. In Laribacter hongkongensis (strain HLHK9), this protein is Aspartate carbamoyltransferase catalytic subunit.